The sequence spans 392 residues: Tryptophan synthase beta chain (392 aa).

Residue Lys-86 is modified to N6-(pyridoxal phosphate)lysine.

This sequence belongs to the TrpB family. In terms of assembly, tetramer of two alpha and two beta chains. Requires pyridoxal 5'-phosphate as cofactor.

It carries out the reaction (1S,2R)-1-C-(indol-3-yl)glycerol 3-phosphate + L-serine = D-glyceraldehyde 3-phosphate + L-tryptophan + H2O. The protein operates within amino-acid biosynthesis; L-tryptophan biosynthesis; L-tryptophan from chorismate: step 5/5. Its function is as follows. The beta subunit is responsible for the synthesis of L-tryptophan from indole and L-serine. This is Tryptophan synthase beta chain (trpB) from Buchnera aphidicola subsp. Melaphis rhois.